Here is a 251-residue protein sequence, read N- to C-terminus: Histocompatibility antigen 60b (251 aa).

The first 24 residues, 1 to 24 (MAKSSLSLNWSLLVLLNFLGATLS), serve as a signal peptide directing secretion. The Extracellular segment spans residues 25–212 (TGTDSLSCEL…NSDTQGLSFT (188 aa)). Residues Asn-63, Asn-93, Asn-126, and Asn-189 are each glycosylated (N-linked (GlcNAc...) asparagine). A helical transmembrane segment spans residues 213–233 (WIVIICIGGIVSFMAFMVFAW). The Cytoplasmic portion of the chain corresponds to 234–251 (CMLKKKKGALCCSSSSTT).

This sequence belongs to the NKG2D ligand family. In terms of tissue distribution, in strain C57BL/6J, strongly expressed in cardiac muscle and skeletal muscle, with lower expression levels in spleen, liver, kidney and thymus. In strain BALB/cJ, weakly expressed in cardiac muscle, spleen, kidney and thymus.

Its subcellular location is the cell membrane. Its function is as follows. Ligand for the KLRK1 immunosurveillance receptor. Binding to KLRK1 stimulates cell lysis in vitro. In Mus musculus (Mouse), this protein is Histocompatibility antigen 60b.